The primary structure comprises 400 residues: Formate-dependent phosphoribosylglycinamide formyltransferase (400 aa).

N(1)-(5-phospho-beta-D-ribosyl)glycinamide is bound by residues 22-23 and glutamate 82; that span reads EL. Residues arginine 115, lysine 156, 161–166, 196–199, and glutamate 204 each bind ATP; these read SSGKGQ and EGFI. An ATP-grasp domain is found at 120 to 309; it reads RLAAETLGLP…EFALHARAIL (190 aa). Mg(2+) is bound by residues glutamate 268 and glutamate 280. N(1)-(5-phospho-beta-D-ribosyl)glycinamide-binding positions include aspartate 287, lysine 361, and 368–369; that span reads RR.

Belongs to the PurK/PurT family. In terms of assembly, homodimer.

The enzyme catalyses N(1)-(5-phospho-beta-D-ribosyl)glycinamide + formate + ATP = N(2)-formyl-N(1)-(5-phospho-beta-D-ribosyl)glycinamide + ADP + phosphate + H(+). It participates in purine metabolism; IMP biosynthesis via de novo pathway; N(2)-formyl-N(1)-(5-phospho-D-ribosyl)glycinamide from N(1)-(5-phospho-D-ribosyl)glycinamide (formate route): step 1/1. Functionally, involved in the de novo purine biosynthesis. Catalyzes the transfer of formate to 5-phospho-ribosyl-glycinamide (GAR), producing 5-phospho-ribosyl-N-formylglycinamide (FGAR). Formate is provided by PurU via hydrolysis of 10-formyl-tetrahydrofolate. The chain is Formate-dependent phosphoribosylglycinamide formyltransferase from Xanthomonas oryzae pv. oryzae (strain KACC10331 / KXO85).